Here is a 441-residue protein sequence, read N- to C-terminus: Fibroleukin (441 aa).

An N-terminal signal peptide occupies residues 1–15; sequence MKLANWCWLSSTVLA. N25 is a glycosylation site (N-linked (GlcNAc...) asparagine). The stretch at 73-167 forms a coiled coil; that stretch reads SRIEEVFKEV…LEKLNLVNMN (95 aa). Residues 102–128 form a disordered region; sequence QADDSRDPGRNGLLLPGTGAPGETGDN. Residues N179, N237, N265, and N338 are each glycosylated (N-linked (GlcNAc...) asparagine). The Fibrinogen C-terminal domain maps to 206-438; that stretch reads VQQHLIYKDC…EVKMMIRPKH (233 aa).

As to quaternary structure, homotetramer; disulfide-linked.

The protein resides in the secreted. In terms of biological role, may play a role in physiologic lymphocyte functions at mucosal sites. This Bos taurus (Bovine) protein is Fibroleukin (FGL2).